A 137-amino-acid polypeptide reads, in one-letter code: Large ribosomal subunit protein uL16 (137 aa).

Belongs to the universal ribosomal protein uL16 family. In terms of assembly, part of the 50S ribosomal subunit.

Functionally, binds 23S rRNA and is also seen to make contacts with the A and possibly P site tRNAs. The protein is Large ribosomal subunit protein uL16 of Anaplasma phagocytophilum (strain HZ).